Reading from the N-terminus, the 381-residue chain is Short-chain dehydrogenase anuD (381 aa).

6 residues coordinate NADP(+): isoleucine 84, lysine 109, aspartate 133, asparagine 158, tyrosine 244, and lysine 248. Tyrosine 244 (proton acceptor) is an active-site residue. Tyrosine 244 acts as the Proton donor in catalysis. Lysine 248 acts as the Lowers pKa of active site Tyr in catalysis.

The protein belongs to the short-chain dehydrogenases/reductases (SDR) family.

In terms of biological role, highly reducing polyketide synthase; part of the gene cluster that mediates the biosynthesis of annullatin D, an alkylated aromatic polyketide with a fused dihydrobenzofuran lactone ring system that exhibits potent agonistic activities toward the cannabinoid receptors. AnuD does not seem to play a role within the pathway. The annullatin backbone 2-hydroxymethyl-3-pentylphenol is assembled from one acetyl-CoA starter unit and 5 malonyl-CoA elongation units by cooperation of the highly reducing polyketide synthase anuA, the short-chain dehydrogenase anuB and the oxidoreductase anuC, before being hydroxylated at the C-5 alkyl chain by the cytochrome P450 monooxygenase anuE to form (8S)-annullatin E. The prenyltransferase anuH subsequently installs one isoprenyl group at the benzene ring to form (8S)-annullatin J. Enzymatic or nonenzymatic dihydro-benzofuran ring formation between the prenyl and the phenolic hydroxyl groups in (8S)-annullatin J results in two diastereomers (2S,9S)-annullatin H and compound 12. The intermediate (2S,9S)-annullatin H is then converted to (2S,9S)-annullatin D by the FAD-linked oxidoreductase anuG-catalyzed five-member lactone ring formation. The isomer 12 acts as a substrate for the short-chain dehydrogenase anuF and is oxidized to (2R)-annullatin F, which is subsequently acetylated by an acetyltransferase leading to (2R)-annullatin G formation. The remaining enzymes identified within the cluster, anuD, anuI and anuJ, seem not to be involved in annullatin biosynthesis. The protein is Short-chain dehydrogenase anuD of Penicillium roqueforti (strain FM164).